We begin with the raw amino-acid sequence, 367 residues long: Otolith matrix protein 1 (367 aa).

A signal peptide spans 1–23 (MDRLDRRLAATLLLFSFISFSTQ). The Transferrin-like domain maps to 27–363 (ISWCVVSEAE…YTTVLQAFEC (337 aa)).

It belongs to the transferrin family. In terms of assembly, interacts with OTOL1. As to expression, expressed in the sacculus during the day.

It localises to the secreted. Required for normal otolith growth and deposition of otolin-1 in the otolith. This Oncorhynchus mykiss (Rainbow trout) protein is Otolith matrix protein 1 (otomp).